The sequence spans 650 residues: Amyloid beta precursor like protein 1 (650 aa).

Residues 1 to 38 (MGPASPAARGLSRRPGQPPLPLLLPLLLLLLRAQPAIG) form the signal peptide. Over 39-580 (SLAGGSPGAA…APAGTGVSRE (542 aa)) the chain is Extracellular. A GFLD subdomain region spans residues 50–146 (APGSAQVAGL…PFRCLPGEFV (97 aa)). One can recognise an E1 domain in the interval 50–212 (APGSAQVAGL…RGVEYVCCPP (163 aa)). Cystine bridges form between Cys-60–Cys-84, Cys-95–Cys-140, Cys-120–Cys-128, Cys-156–Cys-210, Cys-167–Cys-197, and Cys-181–Cys-209. The interval 154–212 (EGCRFLHQERMDQCESSTRRHQEAQEACSSQGLILHGSGMLLPCGSDRFRGVEYVCCPP) is cuBD subdomain. His-174 contributes to the Cu(2+) binding site. Glu-206, Cys-209, and Cys-210 together coordinate Zn(2+). The tract at residues 214-287 (GTPDPSGTAV…LAVVGKVTPT (74 aa)) is disordered. The O-linked (GalNAc...) threonine glycan is linked to Thr-215. Residue Ser-227 is glycosylated (O-linked (GalNAc...) serine). Thr-228 is a glycosylation site (O-linked (GalNAc...) threonine). An O-glycosylated at three sites region spans residues 285-305 (TPTPRPTDGVDIYFGMPGEIS). Positions 293-484 (GVDIYFGMPG…QELRPQIQEL (192 aa)) constitute an E2 domain. Heparin-binding stretches follow at residues 310–342 (FLRA…SKNL) and 410–441 (LLAL…DPEK). N-linked (GlcNAc...) asparagine glycosylation occurs at Asn-337. Residues 442–459 (AQQMRFQVHTHLQVIEER) are collagen-binding. Asn-461 carries an N-linked (GlcNAc...) asparagine glycan. The interval 492 to 546 (PSELEAPAPGGSSEDKGGLQPPDSKDDTPMTLPKGSTEQDAASPEKEKMNPLEQY) is disordered. Basic and acidic residues-rich tracts occupy residues 504 to 519 (SEDK…KDDT) and 534 to 546 (SPEK…LEQY). N-linked (GlcNAc...) asparagine glycosylation occurs at Asn-551. His-561 is a Cu(2+) binding site. His-561 provides a ligand contact to Zn(2+). A helical transmembrane segment spans residues 581–603 (AVSGLLIMGAGGGSLIVLSMLLL). The short motif at 604 to 615 (RRKKPYGAISHG) is the Basolateral sorting signal element. Residues 604–650 (RRKKPYGAISHGVVEVDPMLTLEEQQLRELQRHGYENPTYRFLEERP) are Cytoplasmic-facing. Residues 632–649 (ELQRHGYENPTYRFLEER) form an interaction with DAB1 region. The interval 636-650 (HGYENPTYRFLEERP) is interaction with DAB2. The Clathrin-binding motif lies at 640–643 (NPTY). The NPXY motif; contains endocytosis signal motif lies at 640-643 (NPTY).

This sequence belongs to the APP family. Monomer and homodimer. Heparin binding promotes homodimerization. Binds, via its C-terminus, to the PID domain of several cytoplasmic proteins, including APBB and APBA family members, MAPK8IP1 and DAB1. Binding to Dab1 inhibits its serine phosphorylation. Interacts with CPEB1. Interacts (via NPXY motif) with DAB2 (via PID domain); the interaction is impaired by tyrosine phosphorylation of the NPXY motif. Interacts (via NPXY motif) with DAB1. Proteolytically cleaved by caspases during neuronal apoptosis. Cleaved, in vitro, at Asp-620 by caspase-3. In terms of processing, N- and O-glycosylated. O-glycosylation with core 1 or possibly core 8 glycans. Glycosylation on Ser-227 is the preferred site to Thr-228. In terms of tissue distribution, expressed in the cerebral cortex where it is localized to the postsynaptic density (PSD).

Its subcellular location is the cell membrane. The protein localises to the cytoplasm. In terms of biological role, may play a role in postsynaptic function. The C-terminal gamma-secretase processed fragment, ALID1, activates transcription activation through APBB1 (Fe65) binding. Couples to JIP signal transduction through C-terminal binding. May interact with cellular G-protein signaling pathways. Can regulate neurite outgrowth through binding to components of the extracellular matrix such as heparin and collagen I. Its function is as follows. The gamma-CTF peptide, C30, is a potent enhancer of neuronal apoptosis. This is Amyloid beta precursor like protein 1 (APLP1) from Homo sapiens (Human).